A 415-amino-acid polypeptide reads, in one-letter code: Adenosylhomocysteinase (415 aa).

Residues Thr53, Asp124, and Glu147 each coordinate substrate. 148–150 lines the NAD(+) pocket; the sequence is TTT. Residues Lys177 and Asp181 each coordinate substrate. Residues Asn182, 211–216, Glu234, Asn269, 290–292, and Asn337 contribute to the NAD(+) site; these read GYGWVG and SGH.

This sequence belongs to the adenosylhomocysteinase family. The cofactor is NAD(+).

The protein localises to the cytoplasm. The catalysed reaction is S-adenosyl-L-homocysteine + H2O = L-homocysteine + adenosine. It participates in amino-acid biosynthesis; L-homocysteine biosynthesis; L-homocysteine from S-adenosyl-L-homocysteine: step 1/1. Functionally, may play a key role in the regulation of the intracellular concentration of adenosylhomocysteine. The chain is Adenosylhomocysteinase from Sulfurisphaera tokodaii (strain DSM 16993 / JCM 10545 / NBRC 100140 / 7) (Sulfolobus tokodaii).